A 274-amino-acid polypeptide reads, in one-letter code: MEALRQRIEAAFEARAEITPATVEPSVRADVEKAIAMLDTGEARVAEKINGEWHVHQWLKKAVLLSFRIFDNGVIEGAETKYFDKVPMKFADYDEARFRKEAIRVVPPAAVRKGSFIGKNTVLMPSYVNLGAFVDEGTMVDTWATVGSCAQIGKNVHLSGGVGIGGVLEPLQAGPTIIEDNCFIGARSEIVEGVIVEEGSVISMGVYIGQSTRIFDRETGEVHYGRVPAGSVVVAGNLPSKCGTYSLYAAIIVKKVDAKTRGKVGINELLRIVD.

Positions 104 and 141 each coordinate substrate.

It belongs to the transferase hexapeptide repeat family. Homotrimer.

Its subcellular location is the cytoplasm. It catalyses the reaction (S)-2,3,4,5-tetrahydrodipicolinate + succinyl-CoA + H2O = (S)-2-succinylamino-6-oxoheptanedioate + CoA. It functions in the pathway amino-acid biosynthesis; L-lysine biosynthesis via DAP pathway; LL-2,6-diaminopimelate from (S)-tetrahydrodipicolinate (succinylase route): step 1/3. The chain is 2,3,4,5-tetrahydropyridine-2,6-dicarboxylate N-succinyltransferase from Shewanella pealeana (strain ATCC 700345 / ANG-SQ1).